The following is a 765-amino-acid chain: Palmitoyltransferase ZDHHC8 (765 aa).

Topologically, residues M1–K13 are cytoplasmic. Residues Y14–F34 form a helical membrane-spanning segment. Residues T35–G52 lie on the Lumenal side of the membrane. A helical membrane pass occupies residues I53–F73. Topologically, residues P74–Y148 are cytoplasmic. In terms of domain architecture, DHHC spans K104–L154. C134 serves as the catalytic S-palmitoyl cysteine intermediate. A helical transmembrane segment spans residues F149–V169. Residues Y170–M190 lie on the Lumenal side of the membrane. Residues C191–V211 form a helical membrane-spanning segment. At T212–V765 the chain is on the cytoplasmic side. The tract at residues G293 to P352 is disordered. A compositionally biased stretch (basic and acidic residues) spans G301–L311. S337 bears the Phosphoserine mark. Residue R441 is modified to Omega-N-methylarginine. Positions L509–R540 are disordered. 6 positions are modified to phosphoserine: S606, S627, S675, S682, S725, and S743. The tract at residues G613 to H747 is disordered. The span at P622–S653 shows a compositional bias: low complexity.

The protein belongs to the DHHC palmitoyltransferase family. ERF2/ZDHHC9 subfamily. As to expression, widely expressed.

The protein localises to the golgi apparatus membrane. It localises to the mitochondrion membrane. It catalyses the reaction L-cysteinyl-[protein] + hexadecanoyl-CoA = S-hexadecanoyl-L-cysteinyl-[protein] + CoA. In terms of biological role, palmitoyltransferase that catalyzes the addition of palmitate onto various protein substrates and therefore functions in several unrelated biological processes. Through the palmitoylation of ABCA1 regulates the localization of the transporter to the plasma membrane and thereby regulates its function in cholesterol and phospholipid efflux. Could also pamitoylate the D(2) dopamine receptor DRD2 and regulate its stability and localization to the plasma membrane. Could also play a role in glutamatergic transmission. (Microbial infection) Able to palmitoylate SARS coronavirus-2/SARS-CoV-2 spike protein following its synthesis in the endoplasmic reticulum (ER). In the infected cell, promotes spike biogenesis by protecting it from premature ER degradation, increases half-life and controls the lipid organization of its immediate membrane environment. Once the virus has formed, spike palmitoylation controls fusion with the target cell. This Homo sapiens (Human) protein is Palmitoyltransferase ZDHHC8.